A 136-amino-acid polypeptide reads, in one-letter code: Cytochrome b5 (136 aa).

A Cytochrome b5 heme-binding domain is found at 5–81; sequence TKVFTLAEVS…LDEYYVGDID (77 aa). Residues His-40 and His-64 each contribute to the heme site. A helical membrane pass occupies residues 107–127; sequence FVVKLLQFLVPLIILGVAFGI.

The protein belongs to the cytochrome b5 family. In terms of tissue distribution, is highly expressed in developing seeds, moderately expressed in flowers, and is expressed at low levels in the leaf.

The protein localises to the endoplasmic reticulum membrane. The protein resides in the microsome membrane. Its function is as follows. Cytochrome b5 is a membrane bound hemoprotein which function as an electron carrier for several membrane bound oxygenases. May play a key role in the modification by desaturation of fatty acids in the endoplasmic reticulum, which in the developing seed is utilized for membrane synthesis and in the developmentally regulated production of large amounts of storage lipids. Is involved in the reduction of cytochrome P-450 and may therefore be involved in flavonoid biosynthesis in the petals. This chain is Cytochrome b5, found in Nicotiana tabacum (Common tobacco).